An 872-amino-acid polypeptide reads, in one-letter code: FHIP family protein CBG19667 (872 aa).

Residues 800 to 841 (SRSSPRSADEHDSTLFYGRSTIPPPGRKPLLREPSHQETLDD) form a disordered region. Residues 829 to 841 (LLREPSHQETLDD) are compositionally biased toward basic and acidic residues.

The protein belongs to the FHIP family.

The sequence is that of FHIP family protein CBG19667 from Caenorhabditis briggsae.